The sequence spans 1232 residues: DNA-directed RNA polymerase subunit beta (1232 aa).

Positions 1170-1232 are disordered; that stretch reads SVDEDADELE…LDLDDFGDEH (63 aa). Acidic residues predominate over residues 1171–1180; it reads VDEDADELEV. Residues 1189–1198 are compositionally biased toward basic and acidic residues; the sequence is PEEKEEKEKE. Acidic residues predominate over residues 1199 to 1232; it reads DSDEYDDLREEDVEPDLEELSLDDLDLDDFGDEH.

It belongs to the RNA polymerase beta chain family. In terms of assembly, the RNAP catalytic core consists of 2 alpha, 1 beta, 1 beta' and 1 omega subunit. When a sigma factor is associated with the core the holoenzyme is formed, which can initiate transcription.

The enzyme catalyses RNA(n) + a ribonucleoside 5'-triphosphate = RNA(n+1) + diphosphate. Functionally, DNA-dependent RNA polymerase catalyzes the transcription of DNA into RNA using the four ribonucleoside triphosphates as substrates. The sequence is that of DNA-directed RNA polymerase subunit beta from Clostridium botulinum (strain Hall / ATCC 3502 / NCTC 13319 / Type A).